We begin with the raw amino-acid sequence, 1375 residues long: MGDFRSFRQNGGSSVDFDGIKISLASADKIRSLSYGEVTKPETINYRTFKPEKNGLFCAKIFGPTKSYECLCGKYKKIKYSGVICERCGVEVTSSRVRRERMGHIELASPVAHIWFLKSLPSKICILLDLTLKNVEKVLYFELYIVIDPGVTTFTKNELITDEAYMNAVREYGPDSFTAMIGAEAIRHMLASLDLEKMAVKLRSQAAATNSEVKKKKIIKTLRLVEQFLGSDSRPVDMILDVIPVMPPDLRPLVMLDGGRFATSDLNALYRSVINRNNRLKSLIYLKAPNIIINNERRMLQEAVDALFDNGRRAKVIKGSNKRPYKSISDMLKGKQGRFRQNLLGKRVDYSGRSVIVVGPALELHQCGLPKKIALELFKPFIYSKLELYGIAPTIKTARRMVQNEQPEVWDVLAKVIHQHPVFLNRAPTLHRLSVQAFEPVLIEGKAIQLHPLVCTAFNADFDGDQMSVHVPLSIEAQVEARLLVMSTNNVLNPANSRPIIVPSKDIVLGVYYLSLEEKGGVVHPVTFCATWEAEHAFANGDIGLHTKIRCGIELEDGVKVYTTTFGRLQLLKILPKGVPFESINMVLTVRDISNLVDLVYKTCGHGKTVEFADGIMELGFRYATLSGISFGKDDMVVPPTKSEHVRRANEEVKEYEFQYQEGLITKHEKYNKVVDAWQKCTDLVAKDMMDGISGYESVAEMNSIFMMAQSGARGSAAQIKQLAGMRGLMAKPSGEIIPNPIISNLREGQGVLEYFNSTHGARKGLADTALKTANSGYLTRRLVDVAQDSIIVEEDCGSSNGLVVRATVEGGVVIIPLSDSIFSRVSATDIIDPSDGSVIVRAGEMFDDKSIERIESLGIDSVRIRSVLTCKSKHGICRKCYGADLSNRKLVALGEAVGVIAAQSVGEPGTQLTMRTFHVGGAATRRVENSSMVAFCGGKVKFTNANLITDRDGNYVVLSRSFEILLVDSLGIEHFQGRVQYGGTVYVKEGEVVPIGKKLADWDLYTVPIVAEASGTVSYADMIEGVSYNEVHDESTGILNRMVVDWRQAESSSGLRPRVEILDESGSVAKCQYSKDAVYLLPLGAILNVSNGDVVKAGDVIAKITKESTTTRDITGGLPRVIELFEARKAKVNAVISEIDGYVEFAKDYYKSKRKVIVRSREDKERIYEYLVPKGRHLIVSEGDFIRRGEPLMDGDPDLHEILRVLGLEALAEYMISEIQRVYRLQGVKINNKHIEVIIRKMLQKVEITDAGDTTFLIGEQIDKSRVERINEVMASQGLRCCSYVPVLLGITRASLQTESFISAASFQETTKVLTEAAVAGKVDRLRGLKENIIAGRLLPVGAGYFIDKLKREFTGERQGKQVSVGVGGDLTST.

Residues Cys70, Cys72, Cys85, and Cys88 each coordinate Zn(2+). 3 residues coordinate Mg(2+): Asp461, Asp463, and Asp465. Zn(2+) is bound by residues Cys797, Cys871, Cys878, and Cys881.

It belongs to the RNA polymerase beta' chain family. In terms of assembly, the RNAP catalytic core consists of 2 alpha, 1 beta, 1 beta' and 1 omega subunit. When a sigma factor is associated with the core the holoenzyme is formed, which can initiate transcription. The cofactor is Mg(2+). Zn(2+) serves as cofactor.

It catalyses the reaction RNA(n) + a ribonucleoside 5'-triphosphate = RNA(n+1) + diphosphate. Functionally, DNA-dependent RNA polymerase catalyzes the transcription of DNA into RNA using the four ribonucleoside triphosphates as substrates. The protein is DNA-directed RNA polymerase subunit beta' of Neorickettsia sennetsu (strain ATCC VR-367 / Miyayama) (Ehrlichia sennetsu).